Consider the following 193-residue polypeptide: Large ribosomal subunit protein bL25 (193 aa).

This sequence belongs to the bacterial ribosomal protein bL25 family. CTC subfamily. As to quaternary structure, part of the 50S ribosomal subunit; part of the 5S rRNA/L5/L18/L25 subcomplex. Contacts the 5S rRNA. Binds to the 5S rRNA independently of L5 and L18.

Functionally, this is one of the proteins that binds to the 5S RNA in the ribosome where it forms part of the central protuberance. This is Large ribosomal subunit protein bL25 from Oleidesulfovibrio alaskensis (strain ATCC BAA-1058 / DSM 17464 / G20) (Desulfovibrio alaskensis).